Reading from the N-terminus, the 34-residue chain is Photosystem II reaction center protein M (34 aa).

The chain crosses the membrane as a helical span at residues 5 to 25 (ILAFIATALFILVPTSFLLII).

This sequence belongs to the PsbM family. As to quaternary structure, PSII is composed of 1 copy each of membrane proteins PsbA, PsbB, PsbC, PsbD, PsbE, PsbF, PsbH, PsbI, PsbJ, PsbK, PsbL, PsbM, PsbT, PsbX, PsbY, PsbZ, Psb30/Ycf12, at least 3 peripheral proteins of the oxygen-evolving complex and a large number of cofactors. It forms dimeric complexes.

The protein resides in the plastid. The protein localises to the chloroplast thylakoid membrane. Its function is as follows. One of the components of the core complex of photosystem II (PSII). PSII is a light-driven water:plastoquinone oxidoreductase that uses light energy to abstract electrons from H(2)O, generating O(2) and a proton gradient subsequently used for ATP formation. It consists of a core antenna complex that captures photons, and an electron transfer chain that converts photonic excitation into a charge separation. This subunit is found at the monomer-monomer interface. The protein is Photosystem II reaction center protein M of Triticum aestivum (Wheat).